The chain runs to 474 residues: MSDEFVIKPESVSPSSNTSEWPLLLKDYDKLLVRSGHYTPIPAGASPLKRDLKSYISSGVINLDKPSNPSSHEVVAWIKRILRCEKTGHSGTLDPKVTGCLIVCVDRATRLVKSQQGAGKEYVCIVRLHDALKDEKELGRGLENLTGALFQRPPLISAVKRQLRVRTIYDSNLIEFDNKRNLGVFWASCEAGTYMRTLCVHLGMLLGVGGHMQELRRVRSGALSENDNLVTLHDVMDAQWVYDNTRDESYLRKIIQPLETLLVGYKRIVVKDSAVNAVCYGAKLMIPGLLRYEEGIELYDEVVLITTKGEAIAVAIAQMSTVDLATCDHGVVAKVKRCIMERDLYPRRWGLGPIAQKKKQMKADGKLDKYGRANENTPETWKKTYVSLENAEPTTAPASKSEEKPLIKEVEKKEVEQKEESKEESKTPEEKKDKKEKKEKKDKKEKKEKKEKKEKKRKADDDESSEKKKKKSKK.

Asp-94 acts as the Nucleophile in catalysis. The PUA domain occupies Tyr-265–Met-340. Disordered stretches follow at residues Gln-356 to Glu-375 and Asn-390 to Lys-474. Basic and acidic residues-rich tracts occupy residues Met-361–Arg-372 and Lys-400–Asp-433. Tandem repeats lie at residues Lys-431–Asp-433, Lys-434–Glu-436, Lys-437–Glu-439, Lys-440–Asp-442, Lys-443–Glu-445, Lys-446–Glu-448, Lys-449–Glu-451, Lys-452–Glu-454, and Lys-455–Arg-457. The tract at residues Lys-431–Asp-460 is 9 X 3 AA tandem repeats of K-K-[DE]. A compositionally biased stretch (basic residues) spans Lys-434–Lys-456.

This sequence belongs to the pseudouridine synthase TruB family. As to quaternary structure, component of the small nucleolar ribonucleoprotein particles containing H/ACA-type snoRNAs (H/ACA snoRNPs).

The protein resides in the nucleus. It is found in the nucleolus. The enzyme catalyses uridine in 5S rRNA = pseudouridine in 5S rRNA. The catalysed reaction is uridine in snRNA = pseudouridine in snRNA. It catalyses the reaction a uridine in mRNA = a pseudouridine in mRNA. In terms of biological role, catalytic subunit of H/ACA small nucleolar ribonucleoprotein (H/ACA snoRNP) complex, which catalyzes pseudouridylation of rRNA. This involves the isomerization of uridine such that the ribose is subsequently attached to C5, instead of the normal N1. Pseudouridine ('psi') residues may serve to stabilize the conformation of rRNAs and play a central role in ribosomal RNA processing. The H/ACA snoRNP complex also mediates pseudouridylation of other types of RNAs. Catalyzes pseudouridylation at position 93 in U2 snRNA. Also catalyzes pseudouridylation of mRNAs; H/ACA-type snoRNAs probably guide pseudouridylation of mRNAs. The chain is H/ACA ribonucleoprotein complex subunit CBF5 (CBF5) from Kluyveromyces lactis (strain ATCC 8585 / CBS 2359 / DSM 70799 / NBRC 1267 / NRRL Y-1140 / WM37) (Yeast).